Here is a 456-residue protein sequence, read N- to C-terminus: Bifunctional protein GlmU (456 aa).

The tract at residues 1–229 (MLNNAMSVVI…LSEVEGVNNR (229 aa)) is pyrophosphorylase. Residues 11-14 (LAAG), Lys25, Gln76, 81-82 (GT), 103-105 (YGD), Gly140, Glu154, Asn169, and Asn227 contribute to the UDP-N-acetyl-alpha-D-glucosamine site. Asp105 contributes to the Mg(2+) binding site. Residue Asn227 coordinates Mg(2+). Residues 230–250 (LQLSRLERVYQSEQAEKLLLA) form a linker region. The segment at 251–456 (GVMLRDPARF…EGWRRPVKKK (206 aa)) is N-acetyltransferase. UDP-N-acetyl-alpha-D-glucosamine-binding residues include Arg333 and Lys351. His363 serves as the catalytic Proton acceptor. UDP-N-acetyl-alpha-D-glucosamine-binding residues include Tyr366 and Asn377. Acetyl-CoA is bound by residues Ala380, 386 to 387 (NY), Ser405, Ala423, and Arg440.

This sequence in the N-terminal section; belongs to the N-acetylglucosamine-1-phosphate uridyltransferase family. The protein in the C-terminal section; belongs to the transferase hexapeptide repeat family. Homotrimer. The cofactor is Mg(2+).

The protein resides in the cytoplasm. It carries out the reaction alpha-D-glucosamine 1-phosphate + acetyl-CoA = N-acetyl-alpha-D-glucosamine 1-phosphate + CoA + H(+). The catalysed reaction is N-acetyl-alpha-D-glucosamine 1-phosphate + UTP + H(+) = UDP-N-acetyl-alpha-D-glucosamine + diphosphate. It participates in nucleotide-sugar biosynthesis; UDP-N-acetyl-alpha-D-glucosamine biosynthesis; N-acetyl-alpha-D-glucosamine 1-phosphate from alpha-D-glucosamine 6-phosphate (route II): step 2/2. The protein operates within nucleotide-sugar biosynthesis; UDP-N-acetyl-alpha-D-glucosamine biosynthesis; UDP-N-acetyl-alpha-D-glucosamine from N-acetyl-alpha-D-glucosamine 1-phosphate: step 1/1. It functions in the pathway bacterial outer membrane biogenesis; LPS lipid A biosynthesis. Its function is as follows. Catalyzes the last two sequential reactions in the de novo biosynthetic pathway for UDP-N-acetylglucosamine (UDP-GlcNAc). The C-terminal domain catalyzes the transfer of acetyl group from acetyl coenzyme A to glucosamine-1-phosphate (GlcN-1-P) to produce N-acetylglucosamine-1-phosphate (GlcNAc-1-P), which is converted into UDP-GlcNAc by the transfer of uridine 5-monophosphate (from uridine 5-triphosphate), a reaction catalyzed by the N-terminal domain. This is Bifunctional protein GlmU from Escherichia coli O6:K15:H31 (strain 536 / UPEC).